The primary structure comprises 242 residues: Ribosomal RNA large subunit methyltransferase E (242 aa).

S-adenosyl-L-methionine contacts are provided by glycine 88, tryptophan 90, aspartate 111, aspartate 127, and aspartate 151. Catalysis depends on lysine 191, which acts as the Proton acceptor.

This sequence belongs to the class I-like SAM-binding methyltransferase superfamily. RNA methyltransferase RlmE family.

The protein localises to the cytoplasm. The catalysed reaction is uridine(2552) in 23S rRNA + S-adenosyl-L-methionine = 2'-O-methyluridine(2552) in 23S rRNA + S-adenosyl-L-homocysteine + H(+). In terms of biological role, specifically methylates the uridine in position 2552 of 23S rRNA at the 2'-O position of the ribose in the fully assembled 50S ribosomal subunit. The protein is Ribosomal RNA large subunit methyltransferase E of Bartonella tribocorum (strain CIP 105476 / IBS 506).